A 309-amino-acid chain; its full sequence is Probable manganese-dependent inorganic pyrophosphatase (309 aa).

6 residues coordinate Mn(2+): histidine 9, aspartate 13, aspartate 15, aspartate 75, histidine 97, and aspartate 149.

This sequence belongs to the PPase class C family. It depends on Mn(2+) as a cofactor.

The protein resides in the cytoplasm. It catalyses the reaction diphosphate + H2O = 2 phosphate + H(+). The protein is Probable manganese-dependent inorganic pyrophosphatase of Bacillus cereus (strain ZK / E33L).